Reading from the N-terminus, the 505-residue chain is ATP synthase subunit alpha, chloroplastic (505 aa).

170 to 177 (GDRQTGKT) is an ATP binding site.

The protein belongs to the ATPase alpha/beta chains family. As to quaternary structure, F-type ATPases have 2 components, CF(1) - the catalytic core - and CF(0) - the membrane proton channel. CF(1) has five subunits: alpha(3), beta(3), gamma(1), delta(1), epsilon(1). CF(0) has four main subunits: a, b, b' and c.

The protein resides in the plastid. It is found in the chloroplast thylakoid membrane. It catalyses the reaction ATP + H2O + 4 H(+)(in) = ADP + phosphate + 5 H(+)(out). Its function is as follows. Produces ATP from ADP in the presence of a proton gradient across the membrane. The alpha chain is a regulatory subunit. This chain is ATP synthase subunit alpha, chloroplastic, found in Oenothera elata subsp. hookeri (Hooker's evening primrose).